A 216-amino-acid chain; its full sequence is Thiopurine S-methyltransferase (216 aa).

S-adenosyl-L-methionine-binding residues include W10, L45, E66, and R123.

The protein belongs to the class I-like SAM-binding methyltransferase superfamily. TPMT family.

Its subcellular location is the cytoplasm. The catalysed reaction is S-adenosyl-L-methionine + a thiopurine = S-adenosyl-L-homocysteine + a thiopurine S-methylether.. The chain is Thiopurine S-methyltransferase from Pseudomonas putida (strain ATCC 47054 / DSM 6125 / CFBP 8728 / NCIMB 11950 / KT2440).